The primary structure comprises 361 residues: Putative geranylgeranyl pyrophosphate synthase 8, chloroplastic (361 aa).

The N-terminal 39 residues, 1 to 39 (MATTVHLSSFSLFIQSRGRRDNSISSVKSLKKRTGLSPS), are a transit peptide targeting the chloroplast. Residues 24-58 (ISSVKSLKKRTGLSPSSALTSQGGRDMIPPQGKSN) form a disordered region. Positions 36–46 (LSPSSALTSQG) are enriched in polar residues. Isopentenyl diphosphate-binding residues include K107, R110, and H139. D146 and D152 together coordinate Mg(2+). Dimethylallyl diphosphate is bound at residue R157. Position 158 (R158) interacts with isopentenyl diphosphate. The dimethylallyl diphosphate site is built by K246, T247, Q284, K301, and K311.

The protein belongs to the FPP/GGPP synthase family. In terms of assembly, monomer. Mg(2+) serves as cofactor.

It localises to the plastid. The protein localises to the chloroplast. It catalyses the reaction isopentenyl diphosphate + dimethylallyl diphosphate = (2E)-geranyl diphosphate + diphosphate. The enzyme catalyses isopentenyl diphosphate + (2E)-geranyl diphosphate = (2E,6E)-farnesyl diphosphate + diphosphate. It carries out the reaction isopentenyl diphosphate + (2E,6E)-farnesyl diphosphate = (2E,6E,10E)-geranylgeranyl diphosphate + diphosphate. It participates in isoprenoid biosynthesis; farnesyl diphosphate biosynthesis; farnesyl diphosphate from geranyl diphosphate and isopentenyl diphosphate: step 1/1. The protein operates within isoprenoid biosynthesis; geranyl diphosphate biosynthesis; geranyl diphosphate from dimethylallyl diphosphate and isopentenyl diphosphate: step 1/1. Its pathway is isoprenoid biosynthesis; geranylgeranyl diphosphate biosynthesis; geranylgeranyl diphosphate from farnesyl diphosphate and isopentenyl diphosphate: step 1/1. In terms of biological role, catalyzes the trans-addition of the three molecules of IPP onto DMAPP to form geranylgeranyl pyrophosphate. This Arabidopsis thaliana (Mouse-ear cress) protein is Putative geranylgeranyl pyrophosphate synthase 8, chloroplastic.